Here is a 303-residue protein sequence, read N- to C-terminus: MQKFDTRTFQGLILTLQDYWARQGCTIVQPLDMEVGAGTSHPMTCLRALGPEPMATAYVQPSRRPTDGRYGENPNRLQHYYQFQVVIKPSPENIQELYLGSLKELGMDPTIHDIRFVEDNWENPTLGAWGLGWEVWLNGMEVTQFTYFQQVGGLECKPVTGEITYGLERLAMYIQGVDSVYDLVWSDGPLGKTTYGDVFHQNEVEQSTYNFEYADVDFLFTCFEQYEKEAQQLLALENPLPLPAYERILKAAHSFNLLDARKAISVTERQRYILRIRTLTKAVAEAYYASREALGFPMCNKDK.

This sequence belongs to the class-II aminoacyl-tRNA synthetase family. In terms of assembly, tetramer of two alpha and two beta subunits.

The protein localises to the cytoplasm. It carries out the reaction tRNA(Gly) + glycine + ATP = glycyl-tRNA(Gly) + AMP + diphosphate. This is Glycine--tRNA ligase alpha subunit from Salmonella paratyphi A (strain ATCC 9150 / SARB42).